Consider the following 386-residue polypeptide: S-adenosylmethionine synthase (386 aa).

Glu-8 serves as a coordination point for Mg(2+). An ATP-binding site is contributed by His-14. Glu-42 serves as a coordination point for K(+). L-methionine-binding residues include Glu-55 and Gln-98. ATP is bound by residues 166–168 (DGK), 234–237 (SGRF), Asp-245, 251–252 (RK), Ala-268, Lys-272, and Lys-276. Position 245 (Asp-245) interacts with L-methionine. Residue Lys-276 participates in L-methionine binding.

This sequence belongs to the AdoMet synthase family. As to quaternary structure, homotetramer. Mn(2+) is required as a cofactor. It depends on Mg(2+) as a cofactor. Co(2+) serves as cofactor. Requires K(+) as cofactor.

The protein resides in the cytoplasm. It carries out the reaction L-methionine + ATP + H2O = S-adenosyl-L-methionine + phosphate + diphosphate. The protein operates within amino-acid biosynthesis; S-adenosyl-L-methionine biosynthesis; S-adenosyl-L-methionine from L-methionine: step 1/1. Its function is as follows. Catalyzes the formation of S-adenosylmethionine from methionine and ATP. The reaction comprises two steps that are both catalyzed by the same enzyme: formation of S-adenosylmethionine (AdoMet) and triphosphate, and subsequent hydrolysis of the triphosphate. In Ostreococcus tauri, this protein is S-adenosylmethionine synthase (METK).